Consider the following 339-residue polypeptide: Phosphate acyltransferase (339 aa).

Belongs to the PlsX family. In terms of assembly, homodimer. Probably interacts with PlsY.

The protein resides in the cytoplasm. The enzyme catalyses a fatty acyl-[ACP] + phosphate = an acyl phosphate + holo-[ACP]. It functions in the pathway lipid metabolism; phospholipid metabolism. In terms of biological role, catalyzes the reversible formation of acyl-phosphate (acyl-PO(4)) from acyl-[acyl-carrier-protein] (acyl-ACP). This enzyme utilizes acyl-ACP as fatty acyl donor, but not acyl-CoA. This Dechloromonas aromatica (strain RCB) protein is Phosphate acyltransferase.